We begin with the raw amino-acid sequence, 498 residues long: Cytochrome P450 monooxygenase idtP (498 aa).

The N-terminal stretch at Met-1 to Ser-20 is a signal peptide. A heme-binding site is contributed by Cys-439.

This sequence belongs to the cytochrome P450 family. Heme serves as cofactor.

It functions in the pathway secondary metabolite biosynthesis. In terms of biological role, cytochrome P450 monooxygenase; part of the gene cluster that mediates the biosynthesis of paspalitrems, indole-diterpene (IDT) mycotoxins that are potent tremorgens in mammals. The geranylgeranyl diphosphate (GGPP) synthase idtG is proposed to catalyze the first step in IDT biosynthesis via catalysis of a series of iterative condensations of isopentenyl diphosphate (IPP) with dimethylallyl diphosphate (DMAPP), geranyl diphosphate (GPP), and farnesyl diphosphate (FPP), to form GGPP. Condensation of indole-3-glycerol phosphate with GGPP by the prenyltransferase idtC then forms 3-geranylgeranylindole (3-GGI). Epoxidation of the two terminal alkenes of the geranylgeranyl moiety by the FAD-dependent monooxygenase idtM, and cyclization by the terpene cyclase idtB then leads to the production of paspaline. The cytochrome P450 monooxygenase idtP then catalyzes oxidative elimination of the pendant methyl group at C-12 of paspaline and generates the C-10 ketone to yield 13-desoxypaxilline. The cytochrome P450 monooxygenase idtQ may catalyze the C-13 oxidation of 13-desoxypaxilline to afford paxilline. Considering that both paspalicine and paxilline were detected in C.paspali, idtQ also catalyzes the formation of paspalinine from 13-desoxypaxilline via paspalicine as an intermediate. Finally, the alpha-prenyltransferase idtF prenylates paspalinine at the C-20 or the C-21 positions to yield paspalitrems A and C, respectively. The hydroxylation of paspalitrem A at C-32 by a still unknown oxidase affords paspalitrem B. This is Cytochrome P450 monooxygenase idtP from Claviceps paspali (Rye ergot fungus).